A 387-amino-acid polypeptide reads, in one-letter code: Monomeric sarcosine oxidase (387 aa).

6–36 (DVIVVGAGSMGMAAGYYLAKQGVKTLLVDSF) is a binding site for FAD. Cys316 carries the post-translational modification S-8alpha-FAD cysteine.

This sequence belongs to the MSOX/MTOX family. MSOX subfamily. Monomer. The cofactor is FAD.

It is found in the cytoplasm. The enzyme catalyses sarcosine + O2 + H2O = formaldehyde + glycine + H2O2. Functionally, catalyzes the oxidative demethylation of sarcosine. In Bacillus sp. (strain NS-129), this protein is Monomeric sarcosine oxidase (soxA).